The sequence spans 175 residues: Transcriptional repressor NrdR (175 aa).

Residues 3–32 fold into a zinc finger; sequence CPYCSHPDTKVIDSRDVDDGVRRRRECVVC. One can recognise an ATP-cone domain in the interval 47–137; the sequence is LFVVKKDQRR…VYREFTDITQ (91 aa).

It belongs to the NrdR family. Requires Zn(2+) as cofactor.

Negatively regulates transcription of bacterial ribonucleotide reductase nrd genes and operons by binding to NrdR-boxes. The polypeptide is Transcriptional repressor NrdR (Dehalococcoides mccartyi (strain ATCC BAA-2266 / KCTC 15142 / 195) (Dehalococcoides ethenogenes (strain 195))).